The following is a 76-amino-acid chain: Conotoxin TxMEKL-011 (76 aa).

Residues 1-19 form the signal peptide; sequence MEKLTILLLVAAVLMSTQA. Positions 20–45 are excised as a propeptide; it reads LVERAGENRSKENIKFLLKRKRAADR. 3 cysteine pairs are disulfide-bonded: C51/C65, C58/C69, and C64/C73.

Belongs to the conotoxin O2 superfamily. As to expression, expressed by the venom duct.

The protein localises to the secreted. In Conus textile (Cloth-of-gold cone), this protein is Conotoxin TxMEKL-011.